We begin with the raw amino-acid sequence, 273 residues long: Manganese catalase (273 aa).

A Mn(2+)-binding site is contributed by Glu-35. Residues Asp-57 and Asp-61 each coordinate Ca(2+). Residues Glu-66, His-69, Glu-149, and His-182 each contribute to the Mn(2+) site. Positions 220, 222, and 224 each coordinate Ca(2+). The disordered stretch occupies residues 254 to 273; the sequence is EKPELKPAPPCVHNTLPGRE.

This sequence belongs to the manganese catalase family. As to quaternary structure, homohexamer. Ca(2+) is required as a cofactor. It depends on Mn(2+) as a cofactor.

The enzyme catalyses 2 H2O2 = O2 + 2 H2O. Its activity is regulated as follows. Inhibited in the presence of EDTA. Resistant to inhibition by sodium azide. Catalyzes the decomposition of hydrogen peroxide into water and oxygen. No significant activity could be detected with any of the other tested substrates, including glutathione, pyrogallol, NADH, NADPH and o-dianisidine. The chain is Manganese catalase from Bacillus subtilis.